The following is an 888-amino-acid chain: E3 ubiquitin-protein ligase SH3RF1 (888 aa).

The segment at 12–53 (CPVCLERLDASAKVLPCQHTFCKRCLLGIVGSRNELRCPECR) adopts an RING-type zinc-finger fold. The span at 108–127 (SSKDLQSSQGGQQPRVQSWS) shows a compositional bias: polar residues. The interval 108–128 (SSKDLQSSQGGQQPRVQSWSP) is disordered. 2 consecutive SH3 domains span residues 134–193 (PQLP…IIKP) and 196–259 (QPPP…FNSA). Residues 275 to 321 (DAGECSSAAAQSSTAPKHSDTKKNTKKRHSFTSLTMANKSSQASQNR) form a disordered region. The segment at 292-362 (HSDTKKNTKK…APSQVHISTT (71 aa)) is interaction with RAC1. Position 304 is a phosphoserine (Ser-304). Positions 305–321 (FTSLTMANKSSQASQNR) are enriched in polar residues. Residues 440–543 (HLRPQTRPSV…STAGGPAQKL (104 aa)) are interaction with AKT2. An SH3 3 domain is found at 445–506 (TRPSVYVAIY…PGNYVAPVTR (62 aa)). Disordered regions lie at residues 516 to 548 (VPMS…GNGV), 620 to 639 (SVGL…LMPG), and 684 to 741 (TVLP…ASPT). Residues 520–535 (TAGQTSRGVTMVSPST) show a composition bias toward polar residues. Ser-532 carries the post-translational modification Phosphoserine. The segment covering 692 to 704 (SPDSASSACGNSS) has biased composition (polar residues). The segment covering 707–718 (KPDKDSKKEKKG) has biased composition (basic and acidic residues). Ser-735 carries the phosphoserine modification. Residues 829-888 (VVCERHRVVVSYPPQSEAELELKEGDIVFVHKKREDGWFKGTLQRNGKTGLFPGSFVENI) form the SH3 4 domain.

The protein belongs to the SH3RF family. As to quaternary structure, interacts with RAC1; in a GTP-dependent manner. Interacts with MAP3K10/MLK2 and MAP3K11/MLK3. Interacts with MAPK8IP; this interaction leads to the PJAC complex (POSH-JIP or SH3RF1/MAPK8IP apoptotic complex) with a 1:1 ratio. Interacts with SIAH1. Interacts with HERP1. Probably part of a signaling complex that may contain SH3RF1, MAPK8IP, DLK1, MAP2K4/MKK4, MAP2K7/MKK7, MAPK8/JNK1, MAPK9/JNK2, AKT1 and AKT2. Found in a complex with RAC2, MAP3K7/TAK1, MAP2K7/MKK7, MAPK8IP1/JIP1, MAPK8/JNK1 and MAPK9/JNK2. Found in a complex with RAC1, MAP3K11/MLK3, MAP2K7/MKK7, MAPK8IP1/JIP1 and MAPK8/JNK1. Interacts with SH3RF2. Phosphorylated at Ser-304 by AKT1 and AKT2. When phosphorylated, it has reduced ability to bind Rac. In terms of processing, autoubiquitinated. Ubiquitinated by SH3RF2, leading to proteasome-mediated degradation.

The protein localises to the cytoplasm. Its subcellular location is the perinuclear region. The protein resides in the cell projection. It is found in the lamellipodium. It localises to the golgi apparatus. The protein localises to the trans-Golgi network. The catalysed reaction is S-ubiquitinyl-[E2 ubiquitin-conjugating enzyme]-L-cysteine + [acceptor protein]-L-lysine = [E2 ubiquitin-conjugating enzyme]-L-cysteine + N(6)-ubiquitinyl-[acceptor protein]-L-lysine.. It functions in the pathway protein modification; protein ubiquitination. In terms of biological role, has E3 ubiquitin-protein ligase activity. In the absence of an external substrate, it can catalyze self-ubiquitination. Stimulates ubiquitination of potassium channel KCNJ1, enhancing it's dynamin-dependent and clathrin-independent endocytosis. Acts as a scaffold protein that coordinates with MAPK8IP1/JIP1 in organizing different components of the JNK pathway, including RAC1 or RAC2, MAP3K11/MLK3 or MAP3K7/TAK1, MAP2K7/MKK7, MAPK8/JNK1 and/or MAPK9/JNK2 into a functional multiprotein complex to ensure the effective activation of the JNK signaling pathway. Regulates the differentiation of CD4(+) and CD8(+) T-cells and promotes T-helper 1 (Th1) cell differentiation. Regulates the activation of MAPK8/JNK1 and MAPK9/JNK2 in CD4(+) T-cells and the activation of MAPK8/JNK1 in CD8(+) T-cells. Plays a crucial role in the migration of neocortical neurons in the developing brain. Controls proper cortical neuronal migration and the formation of proximal cytoplasmic dilation in the leading process (PCDLP) in migratory neocortical neurons by regulating the proper localization of activated RAC1 and F-actin assembly. Functionally, (Microbial infection) Plays an essential role in the targeting of HIV-1 Gag to the plasma membrane, this function is dependent on it's RING domain, and hence it's E3 ligase activity. The sequence is that of E3 ubiquitin-protein ligase SH3RF1 (SH3RF1) from Homo sapiens (Human).